Consider the following 106-residue polypeptide: Small ribosomal subunit protein uS10 (106 aa).

The protein belongs to the universal ribosomal protein uS10 family. Part of the 30S ribosomal subunit.

Functionally, involved in the binding of tRNA to the ribosomes. This Pyrobaculum arsenaticum (strain DSM 13514 / JCM 11321 / PZ6) protein is Small ribosomal subunit protein uS10.